Here is a 626-residue protein sequence, read N- to C-terminus: MYQGHMQKSKEQGYGKLSSDEDLEIIVDQKQGKGSRAADKAVAMVMKEIPREESAEEKPLLTMTSQLVNEQQESRPLLSPSIDDFLCETKSEAIARPVTSNTAVLTTGLDLLDLSEPVSQTQTKAKKSEPSSKTSSLKKKADGSDLISTDAEQRGQPLRVPETSSLDLDIQTQLEKWDDVKFHGDRNTKGHPMAERKSSSSRTGSKELLWSSEHRSQPELSGGKSALNSESASELELVAPTQARLTKEHRWGSALLSRNHSLEEEFERAKAAVESDTEFWDKMQAEWEEMARRNWISENQEAQNQVTISASEKGYYFHTENPFKDWPGAFEEGLKRLKEGDLPVTILFMEAAILQDPGDAEAWQFLGITQAENENEQAAIVALQRCLELQPNNLKALMALAVSYTNTGHQQDACDALKNWIKQNPKYKYLVKSKKGSPGLTRRMSKSPVDSSVLEGVKELYLEAAHQNGDMIDPDLQTGLGVLFHLSGEFNRAIDAFNAALTVRPEDYSLWNRLGATLANGDRSEEAVEAYTRALEIQPGFIRSRYNLGISCINLGAYREAVSNFLTALSLQRKSRNQQQVPHPAISGNIWAALRIALSLMDQPELFQAANLGDLDVLLRAFNLDP.

Disordered stretches follow at residues 1 to 20 (MYQG…LSSD), 118 to 167 (VSQT…SSLD), and 181 to 235 (KFHG…ASEL). Positions 181–198 (KFHGDRNTKGHPMAERKS) are enriched in basic and acidic residues. Ser205 is modified (phosphoserine). Positions 225–235 (SALNSESASEL) are enriched in low complexity. A phosphoserine mark is found at Ser253, Ser257, and Ser261. TPR repeat units follow at residues 326-359 (WPGA…DPGD), 360-393 (AEAW…QPNN), and 395-427 (KALM…NPKY). 2 positions are modified to phosphoserine: Ser445 and Ser447. 3 TPR repeats span residues 474–507 (PDLQ…RPED), 509–541 (SLWN…QPGF), and 543–575 (RSRY…QRKS).

It belongs to the peroxisomal targeting signal receptor family. Interacts with RAB8B. Forms an obligate 4:4 complex with HCN2. May interact with the C-terminal PTS1-type tripeptide peroxisomal targeting signal (SKL-type); the relevance of such interaction is however unclear. Interacts with HCN3. Interacts with HCN4 with a 4:4 HCN4:PEX5L stoichiometry; reduces the effects of cAMP on the voltage-dependence and rate of activation of HCN4. As to expression, mainly expressed in brain. Also expressed in pancreas, testis and pituitary.

Its subcellular location is the cytoplasm. The protein localises to the membrane. In terms of biological role, accessory subunit of hyperpolarization-activated cyclic nucleotide-gated (HCN) channels, regulating their cell-surface expression and cyclic nucleotide dependence. The chain is PEX5-related protein (PEX5L) from Homo sapiens (Human).